A 299-amino-acid polypeptide reads, in one-letter code: Protoheme IX farnesyltransferase (299 aa).

9 helical membrane passes run 25–45 (VVLL…RAGV), 47–67 (WTVL…AAAV), 95–115 (AAAI…LLLF), 119–139 (LAAW…TGFL), 147–167 (IVIG…AVTG), 173–193 (PLLL…ALAI), 218–238 (VHIL…YAIH), 243–263 (LYLV…WVLY), and 279–299 (IWYL…LLNI).

It belongs to the UbiA prenyltransferase family. Protoheme IX farnesyltransferase subfamily.

The protein localises to the cell inner membrane. It catalyses the reaction heme b + (2E,6E)-farnesyl diphosphate + H2O = Fe(II)-heme o + diphosphate. Its pathway is porphyrin-containing compound metabolism; heme O biosynthesis; heme O from protoheme: step 1/1. In terms of biological role, converts heme B (protoheme IX) to heme O by substitution of the vinyl group on carbon 2 of heme B porphyrin ring with a hydroxyethyl farnesyl side group. This chain is Protoheme IX farnesyltransferase, found in Ectopseudomonas mendocina (strain ymp) (Pseudomonas mendocina).